We begin with the raw amino-acid sequence, 434 residues long: Methylenetetrahydrofolate--tRNA-(uracil-5-)-methyltransferase TrmFO (434 aa).

An FAD-binding site is contributed by 9 to 14; it reads GGGLAG.

This sequence belongs to the MnmG family. TrmFO subfamily. The cofactor is FAD.

Its subcellular location is the cytoplasm. It catalyses the reaction uridine(54) in tRNA + (6R)-5,10-methylene-5,6,7,8-tetrahydrofolate + NADH + H(+) = 5-methyluridine(54) in tRNA + (6S)-5,6,7,8-tetrahydrofolate + NAD(+). The enzyme catalyses uridine(54) in tRNA + (6R)-5,10-methylene-5,6,7,8-tetrahydrofolate + NADPH + H(+) = 5-methyluridine(54) in tRNA + (6S)-5,6,7,8-tetrahydrofolate + NADP(+). In terms of biological role, catalyzes the folate-dependent formation of 5-methyl-uridine at position 54 (M-5-U54) in all tRNAs. The sequence is that of Methylenetetrahydrofolate--tRNA-(uracil-5-)-methyltransferase TrmFO from Geobacter sulfurreducens (strain ATCC 51573 / DSM 12127 / PCA).